We begin with the raw amino-acid sequence, 391 residues long: Cilia- and flagella-associated protein 263 (391 aa).

A disordered region spans residues 1–21 (MTDDDSETSASETQAQEESDL). Coiled coils occupy residues 95 to 243 (LSVD…NQEL) and 294 to 369 (LRKE…LKGY).

It belongs to the CFAP263 family. As to quaternary structure, forms a complex with CFAP184; the interaction is required for functional activity in cilia. Interacts with HAP1 and PCM1.

Its subcellular location is the cytoplasm. The protein localises to the cytoskeleton. It is found in the microtubule organizing center. It localises to the centrosome. The protein resides in the centriolar satellite. Its subcellular location is the cell projection. The protein localises to the cilium. In terms of biological role, component of centriolar satellites contributing to primary cilium formation. In complex with CFAP263, acts as a regulator of ciliary beating that connects radial spoke 3 (RS3) to the inner dynein arm (IDA) and the nexin-dynein regulatory complex (N-DRC). The complex is positioned parallel to N-DRC and forms a connection between the arch at the base of RS3, the IDA tail and N-DRC. In Bos taurus (Bovine), this protein is Cilia- and flagella-associated protein 263 (CFAP263).